The chain runs to 261 residues: MVVLSVPAEVTVILLDIEGTTTPIAFVKDILFPYIEENVKEYLQTHWEEEECQQDVSLLRKQAEEDAHLDGAVPIPAASGNGVDDLQQMIQAVVDNVCWQMSLDRKTTALKQLQGHMWRAAFTAGRMKAEFFADVVPAVRKWREAGMKVYIYSSGSVEAQKLLFGHSTEGDILELVDGHFDTKIGHKVESESYRKIADSIGCSTNNILFLTDVTREASAAEEADVHVAVVVRPGNAGLTDDEKTYYSLITSFSELYLPSST.

2 residues coordinate Mg(2+): D16 and E18. Residues 153 to 154 (SS) and K187 each bind substrate. D212 lines the Mg(2+) pocket.

This sequence belongs to the HAD-like hydrolase superfamily. MasA/MtnC family. As to quaternary structure, monomer. Mg(2+) serves as cofactor.

It localises to the cytoplasm. Its subcellular location is the nucleus. It carries out the reaction 5-methylsulfanyl-2,3-dioxopentyl phosphate + H2O = 1,2-dihydroxy-5-(methylsulfanyl)pent-1-en-3-one + phosphate. The protein operates within amino-acid biosynthesis; L-methionine biosynthesis via salvage pathway; L-methionine from S-methyl-5-thio-alpha-D-ribose 1-phosphate: step 3/6. It participates in amino-acid biosynthesis; L-methionine biosynthesis via salvage pathway; L-methionine from S-methyl-5-thio-alpha-D-ribose 1-phosphate: step 4/6. Functionally, bifunctional enzyme that catalyzes the enolization of 2,3-diketo-5-methylthiopentyl-1-phosphate (DK-MTP-1-P) into the intermediate 2-hydroxy-3-keto-5-methylthiopentenyl-1-phosphate (HK-MTPenyl-1-P), which is then dephosphorylated to form the acireductone 1,2-dihydroxy-3-keto-5-methylthiopentene (DHK-MTPene). The chain is Enolase-phosphatase E1 from Homo sapiens (Human).